The chain runs to 80 residues: U1-nemetoxin-Csp1a (80 aa).

Residues 1 to 20 form the signal peptide; sequence MKYFVVFCVLIIAVAAFTSA. Residues 21 to 41 constitute a propeptide that is removed on maturation; the sequence is AEDGEVFEENPLEFPKTIQKR. 4 cysteine pairs are disulfide-bonded: cysteine 42/cysteine 56, cysteine 49/cysteine 60, cysteine 55/cysteine 77, and cysteine 66/cysteine 73.

It belongs to the neurotoxin 13 (insecticidal toxin ABC) family. 02 (Calisoga) subfamily. In terms of tissue distribution, expressed by the venom gland.

The protein resides in the secreted. Functionally, causes paralysis to insect larvae (H.virescens). This toxin is active only on insects. The chain is U1-nemetoxin-Csp1a from Calisoga sp. (Spider).